A 524-amino-acid chain; its full sequence is Methyl-CpG-binding domain-containing protein 8 (524 aa).

A compositionally biased stretch (low complexity) spans 45 to 60 (CSSLSPSSSASLAASA). Residues 45–151 (CSSLSPSSSA…EEELEDNEGQ (107 aa)) are disordered. Over residues 75–84 (FNESAGSRKQ) the composition is skewed to polar residues. The span at 106 to 116 (RQRDDSSREEQ) shows a compositional bias: basic and acidic residues. Residues 136–149 (EEEDEGEEELEDNE) are compositionally biased toward acidic residues. An MBD domain is found at 334 to 406 (VVNACDYGGY…QHYYLQSDNK (73 aa)).

As to expression, expressed in shoot meristems, roots (vasculature and tips), hypocotyls (vasculature), cotyledons (vasculature and hydathodes), young leaves, buds, flowers and stems. Detected in stomata.

It is found in the nucleus. In terms of biological role, probable transcriptional regulator. May regulates developmental traits such as flowering time. The sequence is that of Methyl-CpG-binding domain-containing protein 8 (MBD8) from Arabidopsis thaliana (Mouse-ear cress).